A 219-amino-acid chain; its full sequence is Large ribosomal subunit protein uL3 (219 aa).

This sequence belongs to the universal ribosomal protein uL3 family. As to quaternary structure, part of the 50S ribosomal subunit. Forms a cluster with proteins L14 and L19.

Functionally, one of the primary rRNA binding proteins, it binds directly near the 3'-end of the 23S rRNA, where it nucleates assembly of the 50S subunit. This Salinispora tropica (strain ATCC BAA-916 / DSM 44818 / JCM 13857 / NBRC 105044 / CNB-440) protein is Large ribosomal subunit protein uL3.